The sequence spans 215 residues: Protein Ac34 (215 aa).

In terms of assembly, interacts with host proteins P40, P34 ands P20.

It localises to the host nucleus. In terms of biological role, plays a role in the translocation of the P40 subunit of host Arp2/3 to the nucleus. The robust nuclear accumulation of Arp2/3 induces nuclear actin polymerization to assist in virus replication. Mechanistically, subverts the host CRM1-dependent nuclear export pathway leading to Arp2/3 acumulation in the host nucleus. In Autographa californica nuclear polyhedrosis virus (AcMNPV), this protein is Protein Ac34 (Ac34).